The following is a 298-amino-acid chain: D-alanine--D-alanine ligase (298 aa).

The ATP-grasp domain maps to 97–290 (FYSLFKNYIQ…FDELINIIIK (194 aa)). 124–173 (PFIIKPRKSGSSKGVYIIHNENEYKFYLEKDLKEFQEVLVQEYIKGREIT) lines the ATP pocket. The Mg(2+) site is built by aspartate 245, glutamate 257, and asparagine 259.

Belongs to the D-alanine--D-alanine ligase family. Mg(2+) is required as a cofactor. The cofactor is Mn(2+).

The protein localises to the cytoplasm. It catalyses the reaction 2 D-alanine + ATP = D-alanyl-D-alanine + ADP + phosphate + H(+). Its pathway is cell wall biogenesis; peptidoglycan biosynthesis. In terms of biological role, cell wall formation. This is D-alanine--D-alanine ligase from Petrotoga mobilis (strain DSM 10674 / SJ95).